The primary structure comprises 174 residues: CDP-archaeol synthase (174 aa).

The next 4 helical transmembrane spans lie at 51–71 (LIGL…AGFI), 74–94 (SLLV…ALLG), 112–132 (MLPI…TFLL), and 136–156 (WLLA…IPVF).

This sequence belongs to the CDP-archaeol synthase family. Mg(2+) serves as cofactor.

Its subcellular location is the cell membrane. It catalyses the reaction 2,3-bis-O-(geranylgeranyl)-sn-glycerol 1-phosphate + CTP + H(+) = CDP-2,3-bis-O-(geranylgeranyl)-sn-glycerol + diphosphate. Its pathway is membrane lipid metabolism; glycerophospholipid metabolism. Catalyzes the formation of CDP-2,3-bis-(O-geranylgeranyl)-sn-glycerol (CDP-archaeol) from 2,3-bis-(O-geranylgeranyl)-sn-glycerol 1-phosphate (DGGGP) and CTP. This reaction is the third ether-bond-formation step in the biosynthesis of archaeal membrane lipids. This is CDP-archaeol synthase from Methanocella arvoryzae (strain DSM 22066 / NBRC 105507 / MRE50).